Consider the following 167-residue polypeptide: NAD(P)H-quinone oxidoreductase subunit I, chloroplastic (167 aa).

4Fe-4S ferredoxin-type domains are found at residues glycine 55–lysine 84 and leucine 95–glutamate 124. Residues cysteine 64, cysteine 67, cysteine 70, cysteine 74, cysteine 104, cysteine 107, cysteine 110, and cysteine 114 each coordinate [4Fe-4S] cluster.

This sequence belongs to the complex I 23 kDa subunit family. As to quaternary structure, NDH is composed of at least 16 different subunits, 5 of which are encoded in the nucleus. Requires [4Fe-4S] cluster as cofactor.

It localises to the plastid. Its subcellular location is the chloroplast thylakoid membrane. It carries out the reaction a plastoquinone + NADH + (n+1) H(+)(in) = a plastoquinol + NAD(+) + n H(+)(out). The catalysed reaction is a plastoquinone + NADPH + (n+1) H(+)(in) = a plastoquinol + NADP(+) + n H(+)(out). Its function is as follows. NDH shuttles electrons from NAD(P)H:plastoquinone, via FMN and iron-sulfur (Fe-S) centers, to quinones in the photosynthetic chain and possibly in a chloroplast respiratory chain. The immediate electron acceptor for the enzyme in this species is believed to be plastoquinone. Couples the redox reaction to proton translocation, and thus conserves the redox energy in a proton gradient. The sequence is that of NAD(P)H-quinone oxidoreductase subunit I, chloroplastic from Barbarea verna (Land cress).